A 120-amino-acid chain; its full sequence is Prefoldin subunit beta (120 aa).

The protein belongs to the prefoldin subunit beta family. In terms of assembly, heterohexamer of two alpha and four beta subunits.

It is found in the cytoplasm. In terms of biological role, molecular chaperone capable of stabilizing a range of proteins. Seems to fulfill an ATP-independent, HSP70-like function in archaeal de novo protein folding. This chain is Prefoldin subunit beta (pfdB), found in Methanopyrus kandleri (strain AV19 / DSM 6324 / JCM 9639 / NBRC 100938).